The primary structure comprises 114 residues: Cystatin Pr17a (114 aa).

The signal sequence occupies residues 1–18; it reads MSCLKIITLFLFLAAVIA. The 79-residue stretch at 31–109 folds into the Cystatin domain; it reads GAPEQINPND…QAWLKKTSVK (79 aa). Cys93 and Cys113 are oxidised to a cystine.

It belongs to the cystatin family. Expressed by the venom gland (posterior main gland) (at protein level).

The protein resides in the secreted. The polypeptide is Cystatin Pr17a (Platymeris rhadamanthus (Red spot assassin bug)).